A 582-amino-acid chain; its full sequence is Leucine-rich repeat protein SHOC-2 (582 aa).

Basic and acidic residues-rich tracts occupy residues 1-29 (MSSS…KEAK) and 36-57 (KESK…KKES). Positions 1-90 (MSSSLGKEKD…TRKKSSNAEV (90 aa)) are disordered. Residues 63 to 66 (GVAF) carry the RVxF motif; important for interaction with PP1c motif. LRR repeat units lie at residues 101 to 122 (NSMR…VKEL), 124 to 145 (QLTE…VGCL), 147 to 169 (NLMT…DNLK), 170 to 191 (KLRM…VYRL), 193 to 215 (SLTT…RNLP), 216 to 237 (RLST…IGEL), 239 to 260 (NLIT…IGNC), 262 to 283 (QITN…IGNL), 285 to 307 (SLNR…AKCS), 308 to 329 (ALEE…LLSS), 332 to 353 (KLNS…GPSQ), 356 to 377 (TIYS…IFSR), 380 to 400 (VLSK…DFGT), 403 to 424 (SMVE…VSGL), 426 to 448 (SLEV…GNLR), 449 to 470 (KLRE…IAYL), 472 to 494 (DLQK…GHLT), 495 to 516 (NLTH…IGTL), 518 to 540 (NLEE…LALC), and 542 to 563 (KLSI…IVAG).

Belongs to the SHOC2 family. Component of the SHOC2-MRAS-PP1c (SMP) complex consisting of SHOC2, GTP-bound M-Ras/MRAS and the catalytic subunit of protein phosphatase 1 (either PPP1CA, PPP1CB or PPP1CC). SHOC2 and PP1c preferably bind M-Ras/MRAS, but they also bind K-Ras/KRAS, N-Ras/NRAS and H-Ras/HRAS; these interactions are GTP-dependent and both SHOC2 and PP1c are required to form a stable complex. Interacts with PP1c in the absence of Ras GTPases. Interacts with M-Ras/MRAS and RAF1. Interacts with ERBIN; disrupts the interaction with RAF1 and Ras, preventing the activation of the Ras signaling pathway. Interacts with LZTR1.

The protein resides in the cytoplasm. It is found in the nucleus. Its function is as follows. Core component of the SHOC2-MRAS-PP1c (SMP) holophosphatase complex that regulates activation of the MAPK pathway. Acts as a scaffolding protein in the SMP complex. The SMP complex specifically dephosphorylates the inhibitory phosphorylation at 'Ser-259' of RAF1 kinase, 'Ser-365' of BRAF kinase and 'Ser-214' of ARAF kinase, stimulating their kinase activities. The SMP complex enhances the dephosphorylation activity and substrate specificity of PP1c. In Rattus norvegicus (Rat), this protein is Leucine-rich repeat protein SHOC-2 (Shoc2).